Reading from the N-terminus, the 496-residue chain is Probable cytosol aminopeptidase (496 aa).

Positions 251 and 256 each coordinate Mn(2+). The active site involves Lys263. Mn(2+) is bound by residues Asp274, Asp333, and Glu335. The active site involves Arg337.

This sequence belongs to the peptidase M17 family. Mn(2+) is required as a cofactor.

Its subcellular location is the cytoplasm. It catalyses the reaction Release of an N-terminal amino acid, Xaa-|-Yaa-, in which Xaa is preferably Leu, but may be other amino acids including Pro although not Arg or Lys, and Yaa may be Pro. Amino acid amides and methyl esters are also readily hydrolyzed, but rates on arylamides are exceedingly low.. The catalysed reaction is Release of an N-terminal amino acid, preferentially leucine, but not glutamic or aspartic acids.. Presumably involved in the processing and regular turnover of intracellular proteins. Catalyzes the removal of unsubstituted N-terminal amino acids from various peptides. This is Probable cytosol aminopeptidase from Acidovorax ebreus (strain TPSY) (Diaphorobacter sp. (strain TPSY)).